Here is a 309-residue protein sequence, read N- to C-terminus: HPr kinase/phosphorylase (309 aa).

Residues histidine 139 and lysine 160 contribute to the active site. 154–161 (GESGIGKS) serves as a coordination point for ATP. Serine 161 contributes to the Mg(2+) binding site. The active-site Proton acceptor; for phosphorylation activity. Proton donor; for dephosphorylation activity is the aspartate 178. The important for the catalytic mechanism of both phosphorylation and dephosphorylation stretch occupies residues 202-211 (IELRGIGIID). Glutamate 203 provides a ligand contact to Mg(2+). Arginine 244 is a catalytic residue. Residues 265 to 270 (PIRPGR) form an important for the catalytic mechanism of dephosphorylation region.

It belongs to the HPrK/P family. As to quaternary structure, homohexamer. The cofactor is Mg(2+).

The catalysed reaction is [HPr protein]-L-serine + ATP = [HPr protein]-O-phospho-L-serine + ADP + H(+). It catalyses the reaction [HPr protein]-O-phospho-L-serine + phosphate + H(+) = [HPr protein]-L-serine + diphosphate. Functionally, catalyzes the ATP- as well as the pyrophosphate-dependent phosphorylation of a specific serine residue in HPr, a phosphocarrier protein of the phosphoenolpyruvate-dependent sugar phosphotransferase system (PTS). HprK/P also catalyzes the pyrophosphate-producing, inorganic phosphate-dependent dephosphorylation (phosphorolysis) of seryl-phosphorylated HPr (P-Ser-HPr). The two antagonistic activities of HprK/P are regulated by several intracellular metabolites, which change their concentration in response to the absence or presence of rapidly metabolisable carbon sources (glucose, fructose, etc.) in the growth medium. Therefore, by controlling the phosphorylation state of HPr, HPrK/P is a sensor enzyme that plays a major role in the regulation of carbon metabolism and sugar transport: it mediates carbon catabolite repression (CCR), and regulates PTS-catalyzed carbohydrate uptake and inducer exclusion. The protein is HPr kinase/phosphorylase of Lachnoclostridium phytofermentans (strain ATCC 700394 / DSM 18823 / ISDg) (Clostridium phytofermentans).